A 250-amino-acid chain; its full sequence is MTALLSPDQLEADLRAIGARLYHDQHPFHALLHHGKLNRGQVQAWALNRFEYQRCIPLKDAAILARMEDPALRRIWRQRILDHDGNSPSDGGIARWLHLTDALGLPRELVESGRALLPGTRFAVQAYLHFVREKSLLEAIASSLTELFAPNIIGQRVAGMLQHYDFVSPEALAYFEHRLTEAPRDSDFALDYVKQHADTIEKQQLVKAALHFKCSVLWAQLDALHVAYVSPGVVWPDAFVPERDSKRAAA.

Belongs to the PqqC family.

The catalysed reaction is 6-(2-amino-2-carboxyethyl)-7,8-dioxo-1,2,3,4,7,8-hexahydroquinoline-2,4-dicarboxylate + 3 O2 = pyrroloquinoline quinone + 2 H2O2 + 2 H2O + H(+). Its pathway is cofactor biosynthesis; pyrroloquinoline quinone biosynthesis. Functionally, ring cyclization and eight-electron oxidation of 3a-(2-amino-2-carboxyethyl)-4,5-dioxo-4,5,6,7,8,9-hexahydroquinoline-7,9-dicarboxylic-acid to PQQ. The chain is Pyrroloquinoline-quinone synthase from Xanthomonas campestris pv. campestris (strain 8004).